We begin with the raw amino-acid sequence, 701 residues long: Polyribonucleotide nucleotidyltransferase (701 aa).

Residues Asp487 and Asp493 each coordinate Mg(2+). A KH domain is found at 554–613 (PTMIAMKIDTDKIRDVIGKGGATIRAICEETKASIDIEDDGSIKIFGESKEAAEAARQRV). The S1 motif domain occupies 623–691 (GKIYLGKVER…NRGRIKLSIK (69 aa)).

This sequence belongs to the polyribonucleotide nucleotidyltransferase family. In terms of assembly, component of the RNA degradosome, which is a multiprotein complex involved in RNA processing and mRNA degradation. Mg(2+) is required as a cofactor.

The protein localises to the cytoplasm. The catalysed reaction is RNA(n+1) + phosphate = RNA(n) + a ribonucleoside 5'-diphosphate. Its function is as follows. Involved in mRNA degradation. Catalyzes the phosphorolysis of single-stranded polyribonucleotides processively in the 3'- to 5'-direction. The polypeptide is Polyribonucleotide nucleotidyltransferase (Pseudomonas syringae pv. tomato (strain ATCC BAA-871 / DC3000)).